The sequence spans 430 residues: Adenylosuccinate synthetase (430 aa).

Residues 11-17 and 39-41 contribute to the GTP site; these read GDEGKGK and GHT. The active-site Proton acceptor is the Asp-12. Mg(2+)-binding residues include Asp-12 and Gly-39. Residues 12-15, 37-40, Thr-130, Arg-144, Asn-226, Thr-241, and Arg-305 contribute to the IMP site; these read DEGK and NAGH. Residue His-40 is the Proton donor of the active site. Residue 301-307 coordinates substrate; that stretch reads VTTGRKR. GTP is bound by residues Arg-307, 333-335, and 415-417; these read KLD and GTG.

This sequence belongs to the adenylosuccinate synthetase family. In terms of assembly, homodimer. Mg(2+) serves as cofactor.

The protein localises to the cytoplasm. It carries out the reaction IMP + L-aspartate + GTP = N(6)-(1,2-dicarboxyethyl)-AMP + GDP + phosphate + 2 H(+). It functions in the pathway purine metabolism; AMP biosynthesis via de novo pathway; AMP from IMP: step 1/2. In terms of biological role, plays an important role in the de novo pathway and in the salvage pathway of purine nucleotide biosynthesis. Catalyzes the first committed step in the biosynthesis of AMP from IMP. This is Adenylosuccinate synthetase from Scheffersomyces stipitis (strain ATCC 58785 / CBS 6054 / NBRC 10063 / NRRL Y-11545) (Yeast).